The following is a 154-amino-acid chain: uncharacterized protein (154 aa).

One can recognise an HTH marR-type domain in the interval Met-1–Lys-143. The segment at residues Leu-57–Lys-80 is a DNA-binding region (H-T-H motif).

This is an uncharacterized protein from Bacillus subtilis (strain 168).